The sequence spans 256 residues: 1-(5-phosphoribosyl)-5-[(5-phosphoribosylamino)methylideneamino] imidazole-4-carboxamide isomerase (256 aa).

The active-site Proton acceptor is the Asp8. The active-site Proton donor is Asp129.

This sequence belongs to the HisA/HisF family.

The protein localises to the cytoplasm. The enzyme catalyses 1-(5-phospho-beta-D-ribosyl)-5-[(5-phospho-beta-D-ribosylamino)methylideneamino]imidazole-4-carboxamide = 5-[(5-phospho-1-deoxy-D-ribulos-1-ylimino)methylamino]-1-(5-phospho-beta-D-ribosyl)imidazole-4-carboxamide. It participates in amino-acid biosynthesis; L-histidine biosynthesis; L-histidine from 5-phospho-alpha-D-ribose 1-diphosphate: step 4/9. The polypeptide is 1-(5-phosphoribosyl)-5-[(5-phosphoribosylamino)methylideneamino] imidazole-4-carboxamide isomerase (Synechococcus sp. (strain WH7803)).